We begin with the raw amino-acid sequence, 241 residues long: ATP synthase subunit a (241 aa).

8 consecutive transmembrane segments (helical) span residues 29–49 (NSSL…LFGI), 54–74 (VIPG…ISII), 86–106 (IPLI…GVLP), 114–134 (HVIV…IVGF), 153–173 (WLAP…PVSL), 177–197 (LAAN…FIVN), 200–220 (IFFT…EVFV), and 221–241 (AILQ…DAVK).

Belongs to the ATPase A chain family. In terms of assembly, F-type ATPases have 2 components, CF(1) - the catalytic core - and CF(0) - the membrane proton channel. CF(1) has five subunits: alpha(3), beta(3), gamma(1), delta(1), epsilon(1). CF(0) has three main subunits: a(1), b(2) and c(9-12). The alpha and beta chains form an alternating ring which encloses part of the gamma chain. CF(1) is attached to CF(0) by a central stalk formed by the gamma and epsilon chains, while a peripheral stalk is formed by the delta and b chains.

It is found in the cell inner membrane. In terms of biological role, key component of the proton channel; it plays a direct role in the translocation of protons across the membrane. The sequence is that of ATP synthase subunit a from Wolbachia sp. subsp. Drosophila simulans (strain wRi).